An 85-amino-acid chain; its full sequence is Probable dolichol-phosphate mannosyltransferase subunit 3 (85 aa).

The next 2 helical transmembrane spans lie at 13-33 (VLLV…LSYI) and 37-57 (AHCL…VATF).

The protein belongs to the DPM3 family.

It localises to the endoplasmic reticulum membrane. It participates in protein modification; protein glycosylation. In terms of biological role, stabilizer subunit of the dolichol-phosphate-mannose synthase complex. This is Probable dolichol-phosphate mannosyltransferase subunit 3 from Caenorhabditis briggsae.